A 147-amino-acid chain; its full sequence is Transthyretin (147 aa).

The N-terminal stretch at 1-20 (MASHRLLLLCLAGLVFVSEA) is a signal peptide. Cys30 carries the post-translational modification Sulfocysteine. Residue Lys35 participates in L-thyroxine binding. Position 62 is a 4-carboxyglutamate; in a patient with Moyamoya disease (Glu62). Ser72 is subject to Phosphoserine. Glu74 serves as a coordination point for L-thyroxine. Residue Asn118 is glycosylated (N-linked (GlcNAc...) asparagine). Ser137 contacts L-thyroxine.

The protein belongs to the transthyretin family. In terms of assembly, homotetramer. Dimer of dimers. In the homotetramer, subunits assemble around a central channel that can accommodate two ligand molecules. Interacts with RBP4. Post-translationally, not glycosylated under normal conditions. Following unfolding, caused for example by variant AMYLD1 'Gly-38', the cryptic Asn-118 site is exposed and glycosylated by STT3B-containing OST complex, leading to its degradation by the ER-associated degradation (ERAD) pathway. In terms of processing, sulfonation of the reactive cysteine Cys-30 enhances the stability of the native conformation of TTR, avoiding misassembly of the protein leading to amyloid formation. Detected in serum and cerebrospinal fluid (at protein level). Highly expressed in choroid plexus epithelial cells. Detected in retina pigment epithelium and liver.

The protein resides in the secreted. Its subcellular location is the cytoplasm. Its function is as follows. Thyroid hormone-binding protein. Probably transports thyroxine from the bloodstream to the brain. The chain is Transthyretin (TTR) from Homo sapiens (Human).